Consider the following 338-residue polypeptide: Erlin-2 (338 aa).

The Cytoplasmic segment spans residues 1–3 (MAQ). A helical membrane pass occupies residues 4–24 (LGAVVAVAASFFCASLFSAVH). Topologically, residues 25 to 338 (KIEEGHIGVY…DEPMEADSEN (314 aa)) are lumenal. The N-linked (GlcNAc...) asparagine glycan is linked to N106. Residues 177–309 (EAIRRNYELM…DIPNMFMDSA (133 aa)) form an interaction with ERLIN1 region. An N6-acetyllysine modification is found at K267.

The protein belongs to the band 7/mec-2 family. As to quaternary structure, forms a heteromeric complex with ERLIN1. In complex with ERLIN1, interacts with RNF170. Interacts with activated ITPR1, independently of the degree of ITPR1 polyubiquitination. Interacts with SCAP, INSIG1, SREBF1 and SREBF2 under cholesterol sufficiency conditions; indicative for an association with the SCAP-SREBP-INSIG complex. Probably part of an AMFR/gp78 and INSIG1-containing ubiquitin ligase complex involved in ERAD of HMGCR. Interacts with TMUB1; TMUB1 bridges the association with AMFR. Interacts with SYVN1 and RNF139. Interacts with TMEM259. Interacts with TMEM41B. Deubiquitinated by USP25; leading to stabilization.

The protein localises to the endoplasmic reticulum membrane. Component of the ERLIN1/ERLIN2 complex which mediates the endoplasmic reticulum-associated degradation (ERAD) of inositol 1,4,5-trisphosphate receptors (IP3Rs) such as ITPR1. Promotes sterol-accelerated ERAD of HMGCR probably implicating an AMFR/gp78-containing ubiquitin ligase complex. Involved in regulation of cellular cholesterol homeostasis by regulation the SREBP signaling pathway. May promote ER retention of the SCAP-SREBF complex. This chain is Erlin-2 (ERLIN2), found in Bos taurus (Bovine).